Here is a 466-residue protein sequence, read N- to C-terminus: Alpha-1A adrenergic receptor (466 aa).

Residues 1–27 (MVFLSGNASDSSNCTHPPPPVNISKAI) are Extracellular-facing. 3 N-linked (GlcNAc...) asparagine glycosylation sites follow: N7, N13, and N22. Residues 28 to 51 (LLGVILGGLILFGVLGNILVILSV) traverse the membrane as a helical segment. Over 52-64 (ACHRHLHSVTHYY) the chain is Cytoplasmic. Residues 65 to 88 (IVNLAVADLLLTSTVLPFSAIFEI) form a helical membrane-spanning segment. Topologically, residues 89 to 99 (LGYWAFGRVFC) are extracellular. C99 and C176 are disulfide-bonded. The chain crosses the membrane as a helical span at residues 100–122 (NVWAAVDVLCCTASIMGLCIISI). Topologically, residues 123 to 143 (DRYIGVSYPLRYPTIVTQKRG) are cytoplasmic. Residues 144–167 (LMALLCVWALSLVISIGPLFGWRQ) form a helical membrane-spanning segment. Topologically, residues 168–181 (PAPEDETICQINEE) are extracellular. Residues 182–205 (PGYVLFSALGSFYVPLTIILVMYC) traverse the membrane as a helical segment. The Cytoplasmic portion of the chain corresponds to 206 to 273 (RVYVVAKRES…FSREKKAAKT (68 aa)). A Phosphoserine; by PKA modification is found at S215. The chain crosses the membrane as a helical span at residues 274–297 (LGIVVGCFVLCWLPFFLVMPIGSF). Topologically, residues 298–305 (FPDFRPSE) are extracellular. The helical transmembrane segment at 306–329 (TVFKIAFWLGYLNSCINPIIYPCS) threads the bilayer. The Cytoplasmic segment spans residues 330–466 (SQEFKKAFQN…ISLSENGEEV (137 aa)). A Nuclear localization signal motif is present at residues 334 to 349 (KKAFQNVLRIQCLRRK). C345 carries S-palmitoyl cysteine lipidation.

Belongs to the G-protein coupled receptor 1 family. Adrenergic receptor subfamily. ADRA1A sub-subfamily. As to quaternary structure, homo- and heterooligomer. Heterooligomerizes with ADRA1B homooligomers in cardiac myocytes. Interacts with CAVIN4.

Its subcellular location is the nucleus membrane. It localises to the cell membrane. The protein resides in the cytoplasm. It is found in the membrane. The protein localises to the caveola. Its function is as follows. This alpha-adrenergic receptor mediates its action by association with G proteins that activate a phosphatidylinositol-calcium second messenger system. Its effect is mediated by G(q) and G(11) proteins. Nuclear ADRA1A-ADRA1B heterooligomers regulate phenylephrine (PE)-stimulated ERK signaling in cardiac myocytes. In Bos taurus (Bovine), this protein is Alpha-1A adrenergic receptor (ADRA1A).